Here is a 529-residue protein sequence, read N- to C-terminus: Peptide chain release factor 3 (529 aa).

Positions 11 to 280 (AKRRTFAIIS…GLVEWAPAPM (270 aa)) constitute a tr-type G domain. GTP is bound by residues 20–27 (SHPDAGKT), 88–92 (DTPGH), and 142–145 (NKLD).

Belongs to the TRAFAC class translation factor GTPase superfamily. Classic translation factor GTPase family. PrfC subfamily.

It is found in the cytoplasm. In terms of biological role, increases the formation of ribosomal termination complexes and stimulates activities of RF-1 and RF-2. It binds guanine nucleotides and has strong preference for UGA stop codons. It may interact directly with the ribosome. The stimulation of RF-1 and RF-2 is significantly reduced by GTP and GDP, but not by GMP. The sequence is that of Peptide chain release factor 3 from Escherichia coli O8 (strain IAI1).